A 464-amino-acid chain; its full sequence is ATP synthase subunit beta (464 aa).

151-158 (GGAGVGKT) is a binding site for ATP.

The protein belongs to the ATPase alpha/beta chains family. As to quaternary structure, F-type ATPases have 2 components, CF(1) - the catalytic core - and CF(0) - the membrane proton channel. CF(1) has five subunits: alpha(3), beta(3), gamma(1), delta(1), epsilon(1). CF(0) has three main subunits: a(1), b(2) and c(9-12). The alpha and beta chains form an alternating ring which encloses part of the gamma chain. CF(1) is attached to CF(0) by a central stalk formed by the gamma and epsilon chains, while a peripheral stalk is formed by the delta and b chains.

The protein resides in the cell membrane. The catalysed reaction is ATP + H2O + 4 H(+)(in) = ADP + phosphate + 5 H(+)(out). Produces ATP from ADP in the presence of a proton gradient across the membrane. The catalytic sites are hosted primarily by the beta subunits. The chain is ATP synthase subunit beta from Clostridium kluyveri (strain ATCC 8527 / DSM 555 / NBRC 12016 / NCIMB 10680 / K1).